The primary structure comprises 1133 residues: Nuclear pore complex-interacting protein family member B5 (1133 aa).

A helical membrane pass occupies residues tryptophan 60 to valine 84. Disordered stretches follow at residues asparagine 241–serine 262, leucine 290–proline 575, and glutamate 868–serine 1133. Positions glutamine 252–serine 262 are enriched in polar residues. Residues proline 349–proline 359 are compositionally biased toward pro residues. 7 stretches are compositionally biased toward basic and acidic residues: residues aspartate 406 to arginine 416, aspartate 448 to arginine 458, aspartate 490 to arginine 500, aspartate 528 to arginine 538, aspartate 903 to arginine 913, aspartate 945 to arginine 955, and aspartate 987 to arginine 997.

It belongs to the NPIP family.

It is found in the membrane. The polypeptide is Nuclear pore complex-interacting protein family member B5 (NPIPB5) (Homo sapiens (Human)).